The following is a 418-amino-acid chain: Tyrosine--tRNA ligase (418 aa).

Position 38 (tyrosine 38) interacts with L-tyrosine. Residues 43–52 carry the 'HIGH' region motif; the sequence is CTAKSLHVGS. L-tyrosine contacts are provided by tyrosine 175 and glutamine 179. Residues 235–239 carry the 'KMSKS' region motif; that stretch reads KMGKT. Lysine 238 provides a ligand contact to ATP. The 66-residue stretch at 348 to 413 folds into the S4 RNA-binding domain; that stretch reads LPIIKLLQIS…CGKKRHLKIM (66 aa).

This sequence belongs to the class-I aminoacyl-tRNA synthetase family. TyrS type 1 subfamily. In terms of assembly, homodimer.

It is found in the cytoplasm. It carries out the reaction tRNA(Tyr) + L-tyrosine + ATP = L-tyrosyl-tRNA(Tyr) + AMP + diphosphate + H(+). Its function is as follows. Catalyzes the attachment of tyrosine to tRNA(Tyr) in a two-step reaction: tyrosine is first activated by ATP to form Tyr-AMP and then transferred to the acceptor end of tRNA(Tyr). This Ehrlichia canis (strain Jake) protein is Tyrosine--tRNA ligase.